A 2513-amino-acid polypeptide reads, in one-letter code: Highly reducing polyketide synthase ACRTS2 (2513 aa).

The region spanning 4-429 is the Ketosynthase family 3 (KS3) domain; it reads DTPVAIIGVS…GSSSAVIIDR (426 aa). Catalysis depends on for beta-ketoacyl synthase activity residues C174, H313, and H353. The segment at 547–875 is malonyl-CoA:ACP transacylase (MAT) domain; the sequence is VFTGQGAQYA…NYLPSLLRGT (329 aa). The active-site For malonyltransferase activity is the S635. The tract at residues 942–1074 is N-terminal hotdog fold; sequence HALIGRKAPS…GKIEPEIADL (133 aa). The tract at residues 942 to 1253 is dehydratase (DH) domain; the sequence is HALIGRKAPS…TFRTVSSADD (312 aa). The PKS/mFAS DH domain maps to 942–1254; that stretch reads HALIGRKAPS…FRTVSSADDQ (313 aa). The active-site Proton acceptor; for dehydratase activity is H974. The interval 1092–1254 is C-terminal hotdog fold; that stretch reads AGVIEHDMDN…FRTVSSADDQ (163 aa). D1161 functions as the Proton donor; for dehydratase activity in the catalytic mechanism. The segment at 1407-1600 is methyltransferase (CMet) domain; sequence SKIIGYLTEN…IPTNYRTDNP (194 aa). Positions 1816–2127 are enoylreductase (ER) domain; the sequence is GSPDTIYFRR…SRDHIGRLVV (312 aa). The segment at 2152-2327 is ketoreductase (KR) domain; it reads ATYLVAGGTR…YTVSIGLPVV (176 aa). A Carrier domain is found at 2433–2510; the sequence is DPLTGLIEAL…ALAVNILAQR (78 aa). S2470 is subject to O-(pantetheine 4'-phosphoryl)serine.

The protein operates within mycotoxin biosynthesis. In terms of biological role, highly reducing polyketide synthase; part of the gene cluster that mediates the biosynthesis of the host-selective toxins (HSTs) ACR-toxins responsible for brown spot of rough lemon disease by the rough lemon pathotype. ACR-toxins cause uncoupling of mitochondrial oxidative-phosphorylation similar to that of classic protonophore. The structure of the major form of ACR-toxin (ACR-toxin I) consists of an alpha-dihydropyrone ring in a 19-carbon polyalcohol, a typical polyketide structure. Minor toxins were characterized as having a pyrone ring with polyalcohol side chains different in length and showing weaker toxicity. The highly reducing polyketide synthase ACRTS2 has all necessary enzymatic domains for multiple cycles of condensation and beta-keto processing. The cytochrome P450 monooxygenase ACRTS1 has also been shown to be essential for ACR-toxin biosynthesis, however its exact role in the pathway has not been elucidated yet. The polypeptide is Highly reducing polyketide synthase ACRTS2 (Alternaria alternata (Alternaria rot fungus)).